A 429-amino-acid chain; its full sequence is C4-dicarboxylate transport protein (429 aa).

A run of 8 helical transmembrane segments spans residues L3 to L23, L44 to M64, I76 to V96, I142 to F162, V184 to M204, L222 to A242, V326 to V346, and I352 to I372.

Belongs to the dicarboxylate/amino acid:cation symporter (DAACS) (TC 2.A.23) family.

The protein resides in the cell inner membrane. Functionally, responsible for the transport of dicarboxylates such as succinate, fumarate, and malate from the periplasm across the membrane. In Serratia proteamaculans (strain 568), this protein is C4-dicarboxylate transport protein.